A 192-amino-acid chain; its full sequence is Orotate phosphoribosyltransferase (192 aa).

5-phospho-alpha-D-ribose 1-diphosphate is bound by residues Arg-102, Lys-103, Lys-106, and 129–137; that span reads EDVVTTGRS. The orotate site is built by Thr-133 and Arg-161.

The protein belongs to the purine/pyrimidine phosphoribosyltransferase family. PyrE subfamily. As to quaternary structure, homodimer. Requires Mg(2+) as cofactor.

It catalyses the reaction orotidine 5'-phosphate + diphosphate = orotate + 5-phospho-alpha-D-ribose 1-diphosphate. The protein operates within pyrimidine metabolism; UMP biosynthesis via de novo pathway; UMP from orotate: step 1/2. Its function is as follows. Catalyzes the transfer of a ribosyl phosphate group from 5-phosphoribose 1-diphosphate to orotate, leading to the formation of orotidine monophosphate (OMP). This is Orotate phosphoribosyltransferase from Prochlorococcus marinus (strain SARG / CCMP1375 / SS120).